Here is a 38-residue protein sequence, read N- to C-terminus: Large ribosomal subunit protein bL36 (38 aa).

The protein belongs to the bacterial ribosomal protein bL36 family.

This is Large ribosomal subunit protein bL36 from Chloroherpeton thalassium (strain ATCC 35110 / GB-78).